Reading from the N-terminus, the 1218-residue chain is Probable cation-transporting ATPase 13A5 (1218 aa).

Helical transmembrane passes span 33-53, 222-242, 401-421, and 433-453; these read KAFC…VFYW, GYIE…VLSV, FIVF…GVYM, and MALI…LTIG. The active-site 4-aspartylphosphate intermediate is Asp486. 3 N-linked (GlcNAc...) asparagine glycosylation sites follow: Asn540, Asn669, and Asn819. Mg(2+) is bound by residues Asp850 and Asp854. The next 6 membrane-spanning stretches (helical) occupy residues 903–923, 940–956, 973–993, 1042–1062, 1077–1097, and 1115–1135; these read FGVF…ALLL, VAIT…THAY, LLLS…SAFL, FETT…AFIF, IFSF…FSDF, and VLIL…EDSI.

This sequence belongs to the cation transport ATPase (P-type) (TC 3.A.3) family. Type V subfamily.

It localises to the membrane. It carries out the reaction ATP + H2O = ADP + phosphate + H(+). This chain is Probable cation-transporting ATPase 13A5 (ATP13A5), found in Homo sapiens (Human).